A 92-amino-acid polypeptide reads, in one-letter code: Acylphosphatase (92 aa).

One can recognise an Acylphosphatase-like domain in the interval 5–92 (RAHVFISGRV…GKEGIFTIVW (88 aa)). Catalysis depends on residues arginine 20 and asparagine 38.

Belongs to the acylphosphatase family.

It catalyses the reaction an acyl phosphate + H2O = a carboxylate + phosphate + H(+). In Chloroflexus aurantiacus (strain ATCC 29366 / DSM 635 / J-10-fl), this protein is Acylphosphatase (acyP).